A 381-amino-acid chain; its full sequence is Creatine kinase M-type (381 aa).

A Phosphagen kinase N-terminal domain is found at 11–98 (KLNFKAEEEY…FDPIIQDRHG (88 aa)). The region spanning 125 to 367 (YVLSSRVRTG…KLMVEMEKKL (243 aa)) is the Phosphagen kinase C-terminal domain. Residue 128–132 (SSRVR) coordinates ATP. Phosphoserine is present on S164. T166 carries the phosphothreonine modification. Residue S178 is modified to Phosphoserine. T180 is subject to Phosphothreonine. H191 lines the ATP pocket. A Phosphoserine modification is found at S199. Residues R236 and R292 each coordinate ATP. 2 positions are modified to phosphothreonine: T313 and T322. Residues 320 to 325 (RGTGGV) and D335 each bind ATP. S372 carries the post-translational modification Phosphoserine.

Belongs to the ATP:guanido phosphotransferase family. Dimer of identical or non-identical chains, which can be either B (brain type) or M (muscle type). With MM being the major form in skeletal muscle and myocardium, MB existing in myocardium, and BB existing in many tissues, especially brain.

The protein localises to the cytoplasm. The catalysed reaction is creatine + ATP = N-phosphocreatine + ADP + H(+). Its function is as follows. Reversibly catalyzes the transfer of phosphate between ATP and various phosphogens (e.g. creatine phosphate). Creatine kinase isoenzymes play a central role in energy transduction in tissues with large, fluctuating energy demands, such as skeletal muscle, heart, brain and spermatozoa. The protein is Creatine kinase M-type (CKM) of Bos taurus (Bovine).